The primary structure comprises 296 residues: Protein ea31 (296 aa).

In Escherichia phage lambda (Bacteriophage lambda), this protein is Protein ea31 (ea31).